The following is a 369-amino-acid chain: MLKEVPIKRRQSTKIYVGNVPVGGDAPIAVQSMTNTRTTDIEATIAQIKALERVGADIVRVSVPTMDAAEAFKVIKQQVNVPLVADIHFDYRIALKVAEYGVDCLRINPGNIGNEERIRAVVDCAKDKNIPIRIGVNAGSLERDLQEKYGEPTPQALLESALRHVEILDRFNFDQFKVSVKASDVFLAVESYRLLAKAIKQPIHLGITEAGGARAGSVKSAIGLGLLLSEGIGDTLRVSLAADPVDEVKVGFDILKSLRIRSRGINFVACPTCSRQEIDVIATVNALEQRLEDILTPMDVSIIGCVVNGPGEALVSDLGVTGSNKMSGFYLDGVRQKERFDNDKLIDQLEAKIRAKVAQQHHRIAIEQI.

Positions 270, 273, 305, and 312 each coordinate [4Fe-4S] cluster.

It belongs to the IspG family. Requires [4Fe-4S] cluster as cofactor.

It carries out the reaction (2E)-4-hydroxy-3-methylbut-2-enyl diphosphate + oxidized [flavodoxin] + H2O + 2 H(+) = 2-C-methyl-D-erythritol 2,4-cyclic diphosphate + reduced [flavodoxin]. The protein operates within isoprenoid biosynthesis; isopentenyl diphosphate biosynthesis via DXP pathway; isopentenyl diphosphate from 1-deoxy-D-xylulose 5-phosphate: step 5/6. Converts 2C-methyl-D-erythritol 2,4-cyclodiphosphate (ME-2,4cPP) into 1-hydroxy-2-methyl-2-(E)-butenyl 4-diphosphate. The polypeptide is 4-hydroxy-3-methylbut-2-en-1-yl diphosphate synthase (flavodoxin) (Haemophilus ducreyi (strain 35000HP / ATCC 700724)).